Reading from the N-terminus, the 271-residue chain is Elongation factor Ts (271 aa).

Positions Thr-76–Val-79 are involved in Mg(2+) ion dislocation from EF-Tu.

The protein belongs to the EF-Ts family.

It is found in the cytoplasm. Associates with the EF-Tu.GDP complex and induces the exchange of GDP to GTP. It remains bound to the aminoacyl-tRNA.EF-Tu.GTP complex up to the GTP hydrolysis stage on the ribosome. In Mycobacterium bovis (strain BCG / Pasteur 1173P2), this protein is Elongation factor Ts.